A 426-amino-acid chain; its full sequence is Glutamate-1-semialdehyde 2,1-aminomutase (426 aa).

Lys265 carries the N6-(pyridoxal phosphate)lysine modification.

This sequence belongs to the class-III pyridoxal-phosphate-dependent aminotransferase family. HemL subfamily. Homodimer. The cofactor is pyridoxal 5'-phosphate.

Its subcellular location is the cytoplasm. The catalysed reaction is (S)-4-amino-5-oxopentanoate = 5-aminolevulinate. It functions in the pathway porphyrin-containing compound metabolism; protoporphyrin-IX biosynthesis; 5-aminolevulinate from L-glutamyl-tRNA(Glu): step 2/2. In Klebsiella pneumoniae (strain 342), this protein is Glutamate-1-semialdehyde 2,1-aminomutase.